A 32-amino-acid polypeptide reads, in one-letter code: Alpha-amylase inhibitor AAI (32 aa).

3 disulfides stabilise this stretch: C1–C18, C8–C23, and C17–C31.

In terms of tissue distribution, endosperm.

Its function is as follows. Alpha-amylase inhibitor. It is active against alpha-amylases from Tribolium castaneum and Prostephanus truncatus larvae. This Amaranthus hypochondriacus (Prince-of-Wales feather) protein is Alpha-amylase inhibitor AAI (AAI).